A 194-amino-acid polypeptide reads, in one-letter code: GTP cyclohydrolase 1 (194 aa).

Positions 83, 86, and 155 each coordinate Zn(2+).

Belongs to the GTP cyclohydrolase I family. In terms of assembly, toroid-shaped homodecamer, composed of two pentamers of five dimers.

The catalysed reaction is GTP + H2O = 7,8-dihydroneopterin 3'-triphosphate + formate + H(+). It functions in the pathway cofactor biosynthesis; 7,8-dihydroneopterin triphosphate biosynthesis; 7,8-dihydroneopterin triphosphate from GTP: step 1/1. The chain is GTP cyclohydrolase 1 (folE) from Streptococcus pyogenes serotype M1.